We begin with the raw amino-acid sequence, 269 residues long: 2-dehydro-3-deoxyphosphooctonate aldolase (269 aa).

This sequence belongs to the KdsA family.

It localises to the cytoplasm. The catalysed reaction is D-arabinose 5-phosphate + phosphoenolpyruvate + H2O = 3-deoxy-alpha-D-manno-2-octulosonate-8-phosphate + phosphate. It functions in the pathway carbohydrate biosynthesis; 3-deoxy-D-manno-octulosonate biosynthesis; 3-deoxy-D-manno-octulosonate from D-ribulose 5-phosphate: step 2/3. It participates in bacterial outer membrane biogenesis; lipopolysaccharide biosynthesis. This Chlamydia trachomatis serovar L2 (strain ATCC VR-902B / DSM 19102 / 434/Bu) protein is 2-dehydro-3-deoxyphosphooctonate aldolase.